A 448-amino-acid polypeptide reads, in one-letter code: Rhodanese-like domain-containing protein 8, chloroplastic (448 aa).

The N-terminal 23 residues, Met1 to Lys23, are a transit peptide targeting the chloroplast. The Rhodanese domain maps to Ser220–Trp323. The active-site Cysteine persulfide intermediate is the Cys283.

It localises to the plastid. The protein resides in the chloroplast. In Arabidopsis thaliana (Mouse-ear cress), this protein is Rhodanese-like domain-containing protein 8, chloroplastic (STR8).